Reading from the N-terminus, the 603-residue chain is Membrane protein insertase YidC (603 aa).

The chain crosses the membrane as a helical span at residues 7 to 27; the sequence is FFITIALSVLILAVWQYFYVL. Residues 38-51 show a composition bias toward basic and acidic residues; the sequence is RVEQQRVEEQKKAA. Residues 38-76 are disordered; it reads RVEQQRVEEQKKAAEAANPGAGTPAPAPGTIPNAPGGDT. Residues 52 to 74 are compositionally biased toward low complexity; that stretch reads EAANPGAGTPAPAPGTIPNAPGG. Helical transmembrane passes span 352–372, 378–398, 452–472, 497–517, and 540–560; these read FDLL…FWLI, FLGN…ALFF, WPVA…YITI, LFGL…WPLI, and IFTW…AGLV.

This sequence belongs to the OXA1/ALB3/YidC family. Type 1 subfamily. Interacts with the Sec translocase complex via SecD. Specifically interacts with transmembrane segments of nascent integral membrane proteins during membrane integration.

The protein resides in the cell inner membrane. Functionally, required for the insertion and/or proper folding and/or complex formation of integral membrane proteins into the membrane. Involved in integration of membrane proteins that insert both dependently and independently of the Sec translocase complex, as well as at least some lipoproteins. Aids folding of multispanning membrane proteins. This is Membrane protein insertase YidC from Mesorhizobium japonicum (strain LMG 29417 / CECT 9101 / MAFF 303099) (Mesorhizobium loti (strain MAFF 303099)).